A 192-amino-acid polypeptide reads, in one-letter code: MNAIWIAVAAVSLLGLAFGAILGYASRRFAVEDDPVVEKIDEILPQSQCGQCGYPGCRPYAEAISCNGEKINRCAPGGEAVMLKIAELLNVEPQPLDGEAQELTPARMVAVIDENNCIGCTKCIQACPVDAIVGATRVMHTVMSDLCTGCNLCVDPCPTHCISLQPVAETPDSWKWDLNTIPVRIIPVEHHA.

Residues 1-26 are hydrophobic; that stretch reads MNAIWIAVAAVSLLGLAFGAILGYAS. The 4Fe-4S domain occupies 32–91; that stretch reads EDDPVVEKIDEILPQSQCGQCGYPGCRPYAEAISCNGEKINRCAPGGEAVMLKIAELLNV. Residues Cys-49, Cys-52, Cys-57, Cys-74, Cys-117, Cys-120, Cys-123, Cys-127, Cys-147, Cys-150, Cys-153, and Cys-157 each contribute to the [4Fe-4S] cluster site. 2 4Fe-4S ferredoxin-type domains span residues 108–137 and 138–167; these read MVAV…GATR and VMHT…LQPV.

It belongs to the 4Fe4S bacterial-type ferredoxin family. RnfB subfamily. The complex is composed of six subunits: RsxA, RsxB, RsxC, RsxD, RsxE and RsxG. Requires [4Fe-4S] cluster as cofactor.

The protein localises to the cell inner membrane. Part of a membrane-bound complex that couples electron transfer with translocation of ions across the membrane. Required to maintain the reduced state of SoxR. This is Ion-translocating oxidoreductase complex subunit B from Shigella boydii serotype 4 (strain Sb227).